The sequence spans 256 residues: Triosephosphate isomerase (256 aa).

10–12 (NWK) contacts substrate. Catalysis depends on His-99, which acts as the Electrophile. Glu-171 serves as the catalytic Proton acceptor. Substrate-binding positions include Gly-177, Ser-216, and 237–238 (GG).

The protein belongs to the triosephosphate isomerase family. As to quaternary structure, homodimer.

It is found in the cytoplasm. The enzyme catalyses D-glyceraldehyde 3-phosphate = dihydroxyacetone phosphate. The protein operates within carbohydrate biosynthesis; gluconeogenesis. It participates in carbohydrate degradation; glycolysis; D-glyceraldehyde 3-phosphate from glycerone phosphate: step 1/1. Involved in the gluconeogenesis. Catalyzes stereospecifically the conversion of dihydroxyacetone phosphate (DHAP) to D-glyceraldehyde-3-phosphate (G3P). The protein is Triosephosphate isomerase of Colwellia psychrerythraea (strain 34H / ATCC BAA-681) (Vibrio psychroerythus).